Consider the following 156-residue polypeptide: Arginine repressor (156 aa).

It belongs to the ArgR family.

The protein resides in the cytoplasm. Its pathway is amino-acid biosynthesis; L-arginine biosynthesis [regulation]. Functionally, regulates arginine biosynthesis genes. The sequence is that of Arginine repressor from Tolumonas auensis (strain DSM 9187 / NBRC 110442 / TA 4).